Consider the following 161-residue polypeptide: Non-secretory ribonuclease (161 aa).

Residues 1 to 27 form the signal peptide; it reads MVPKLFTSQICLLLLLGLLAVEGSLHV. The C-linked (Man) tryptophan glycan is linked to Trp-34. His-42 acts as the Proton acceptor in catalysis. Asn-44 carries an N-linked (GlcNAc...) asparagine glycan. 4 cysteine pairs are disulfide-bonded: Cys-50–Cys-110, Cys-64–Cys-123, Cys-82–Cys-138, and Cys-89–Cys-98. Tyr-60 bears the 3'-nitrotyrosine mark. 65 to 69 serves as a coordination point for substrate; that stretch reads KNQNT. N-linked (GlcNAc...) asparagine glycans are attached at residues Asn-86, Asn-92, Asn-111, and Asn-119. His-156 acts as the Proton donor in catalysis.

Belongs to the pancreatic ribonuclease family. Interacts with and forms a tight 1:1 complex with RNH1. Dimerization of two such complexes may occur.

It is found in the lysosome. The protein localises to the cytoplasmic granule. It carries out the reaction an [RNA] containing cytidine + H2O = an [RNA]-3'-cytidine-3'-phosphate + a 5'-hydroxy-ribonucleotide-3'-[RNA].. The catalysed reaction is an [RNA] containing uridine + H2O = an [RNA]-3'-uridine-3'-phosphate + a 5'-hydroxy-ribonucleotide-3'-[RNA].. Its function is as follows. This is a non-secretory ribonuclease. It is a pyrimidine specific nuclease with a slight preference for U. Cytotoxin and helminthotoxin. Possesses a wide variety of biological activities. The polypeptide is Non-secretory ribonuclease (RNASE2) (Gorilla gorilla gorilla (Western lowland gorilla)).